Consider the following 309-residue polypeptide: Tyrosine recombinase XerD (309 aa).

The region spanning 3–88 (MRASLAIENF…ALRQFFRFLY (86 aa)) is the Core-binding (CB) domain. The Tyr recombinase domain maps to 109–302 (PLPKIMSVEN…LEERLHKLVS (194 aa)). Catalysis depends on residues arginine 158, lysine 182, histidine 254, arginine 257, and histidine 280. The O-(3'-phospho-DNA)-tyrosine intermediate role is filled by tyrosine 289.

The protein belongs to the 'phage' integrase family. XerD subfamily. As to quaternary structure, forms a cyclic heterotetrameric complex composed of two molecules of XerC and two molecules of XerD.

It is found in the cytoplasm. Site-specific tyrosine recombinase, which acts by catalyzing the cutting and rejoining of the recombining DNA molecules. The XerC-XerD complex is essential to convert dimers of the bacterial chromosome into monomers to permit their segregation at cell division. It also contributes to the segregational stability of plasmids. This chain is Tyrosine recombinase XerD, found in Brucella suis biovar 1 (strain 1330).